The primary structure comprises 302 residues: Actin maturation protease (302 aa).

A disordered region spans residues 1-26 (MPHTNEDPTAQQAGVILDPPPPLPPP). Residues 85 to 205 (SLIQEGPQCG…WAVISGVLFG (121 aa)) form a peptidase C39-like region. C93 is an active-site residue.

It belongs to the ACTMAP family.

It localises to the cytoplasm. It catalyses the reaction N-terminal N(alpha)-acetyl-L-methionyl-L-aspartyl-[protein] + H2O = N-terminal L-aspartyl-[protein] + N-acetyl-L-methionine. It carries out the reaction N-terminal N(alpha)-acetyl-L-methionyl-L-glutamyl-[protein] + H2O = N-terminal L-glutamyl-[protein] + N-acetyl-L-methionine. The catalysed reaction is N-terminal N(alpha)-acetyl-L-cysteinyl-L-aspartyl-[protein] + H2O = N-terminal L-aspartyl-[protein] + N-acetyl-L-cysteine. The enzyme catalyses N-terminal N(alpha)-acetyl-L-cysteinyl-L-glutamyl-[protein] + H2O = N-terminal L-glutamyl-[protein] + N-acetyl-L-cysteine. Functionally, actin maturation protease that specifically mediates the cleavage of immature acetylated N-terminal actin, thereby contributing to actin maturation. Cleaves N-terminal acetylated methionine of immature cytoplasmic beta- and gamma-actin after translation. Cleaves N-terminal acetylated cysteine of muscle alpha-actin after canonical removal of N-terminal methionine. This chain is Actin maturation protease, found in Xenopus tropicalis (Western clawed frog).